Consider the following 164-residue polypeptide: NADH-quinone oxidoreductase subunit I (164 aa).

4Fe-4S ferredoxin-type domains are found at residues Leu55–Glu85 and Thr95–Asn124. Residues Cys65, Cys68, Cys71, Cys75, Cys104, Cys107, Cys110, and Cys114 each contribute to the [4Fe-4S] cluster site.

Belongs to the complex I 23 kDa subunit family. In terms of assembly, NDH-1 is composed of 14 different subunits. Subunits NuoA, H, J, K, L, M, N constitute the membrane sector of the complex. It depends on [4Fe-4S] cluster as a cofactor.

The protein localises to the cell inner membrane. The catalysed reaction is a quinone + NADH + 5 H(+)(in) = a quinol + NAD(+) + 4 H(+)(out). Functionally, NDH-1 shuttles electrons from NADH, via FMN and iron-sulfur (Fe-S) centers, to quinones in the respiratory chain. The immediate electron acceptor for the enzyme in this species is believed to be ubiquinone. Couples the redox reaction to proton translocation (for every two electrons transferred, four hydrogen ions are translocated across the cytoplasmic membrane), and thus conserves the redox energy in a proton gradient. This chain is NADH-quinone oxidoreductase subunit I, found in Jannaschia sp. (strain CCS1).